Consider the following 370-residue polypeptide: 3-dehydroquinate synthase (370 aa).

NAD(+) contacts are provided by residues 112 to 116 (GVIGD), 136 to 137 (TT), Lys-149, Lys-158, and 176 to 179 (TLKT). The Zn(2+) site is built by Glu-191, His-256, and His-273.

It belongs to the sugar phosphate cyclases superfamily. Dehydroquinate synthase family. Requires Co(2+) as cofactor. Zn(2+) is required as a cofactor. The cofactor is NAD(+).

It localises to the cytoplasm. It catalyses the reaction 7-phospho-2-dehydro-3-deoxy-D-arabino-heptonate = 3-dehydroquinate + phosphate. Its pathway is metabolic intermediate biosynthesis; chorismate biosynthesis; chorismate from D-erythrose 4-phosphate and phosphoenolpyruvate: step 2/7. Its function is as follows. Catalyzes the conversion of 3-deoxy-D-arabino-heptulosonate 7-phosphate (DAHP) to dehydroquinate (DHQ). The protein is 3-dehydroquinate synthase of Prochlorococcus marinus (strain MIT 9211).